The primary structure comprises 283 residues: Elongation factor Ts (283 aa).

The tract at residues 79–82 is involved in Mg(2+) ion dislocation from EF-Tu; sequence TDFV.

This sequence belongs to the EF-Ts family.

The protein localises to the cytoplasm. In terms of biological role, associates with the EF-Tu.GDP complex and induces the exchange of GDP to GTP. It remains bound to the aminoacyl-tRNA.EF-Tu.GTP complex up to the GTP hydrolysis stage on the ribosome. The sequence is that of Elongation factor Ts from Shewanella sp. (strain ANA-3).